The primary structure comprises 386 residues: 5-hydroxytryptamine receptor 1B (386 aa).

At 1 to 42 (MEEQGIQCAPPPPAASQTGVPLVNLSHNCSAESHIYQDSIAL) the chain is on the extracellular side. N-linked (GlcNAc...) asparagine glycans are attached at residues Asn-24 and Asn-28. Residues 43-68 (PWKVLLVALLALITLATTLSNAFVIA) traverse the membrane as a helical segment. Over 69-82 (TVYRTRKLHTPANY) the chain is Cytoplasmic. A helical transmembrane segment spans residues 83-107 (LIASLAVTDLLVSILVMPVSTMYTV). Topologically, residues 108 to 115 (TGRWTLGQ) are extracellular. A helical transmembrane segment spans residues 116 to 141 (VVCDFWLSSDITCCTASIMHLCVIAL). Cys-118 and Cys-195 form a disulfide bridge. Positions 125 and 130 each coordinate ergotamine. Residues 142-144 (DRY) carry the DRY motif; important for ligand-induced conformation changes and signaling motif. The Cytoplasmic segment spans residues 142–161 (DRYWAITDAVEYAAKRTPKR). The helical transmembrane segment at 162 to 180 (AAIMIALVWVFSISISLPP) threads the bilayer. Residues 181-201 (FFWRQAKAEEEVLTCLVNTDH) are Extracellular-facing. Val-197 contacts ergotamine. Residues 202–225 (VLYTVYSTGGAFYLPTLLLIALYG) traverse the membrane as a helical segment. At 226–311 (RIYVEARSRI…AARERKATKT (86 aa)) the chain is on the cytoplasmic side. Residues 255–268 (DSPGSTTSVTSINS) show a composition bias toward polar residues. The disordered stretch occupies residues 255-278 (DSPGSTTSVTSINSRAPDLPSESG). The helical transmembrane segment at 312-333 (LGIILGAFIVCWLPFFIISLVM) threads the bilayer. Residues 334–343 (PICKDACWFH) lie on the Extracellular side of the membrane. Residues 344-366 (MATLDFFNWLGYLNSLINPIIYT) traverse the membrane as a helical segment. Residues 361–365 (NPIIY) carry the NPxxY motif; important for ligand-induced conformation changes and signaling motif. Residues 367-386 (MSNEDFKQAFHKLIRFKCAG) lie on the Cytoplasmic side of the membrane. The S-palmitoyl cysteine moiety is linked to residue Cys-384.

This sequence belongs to the G-protein coupled receptor 1 family. As to quaternary structure, homodimer. Heterodimer with HTR1D. Phosphorylated. Desensitization of the receptor may be mediated by its phosphorylation. In terms of processing, palmitoylated.

It localises to the cell membrane. In terms of biological role, G-protein coupled receptor for 5-hydroxytryptamine (serotonin). Also functions as a receptor for ergot alkaloid derivatives, various anxiolytic and antidepressant drugs and other psychoactive substances, such as lysergic acid diethylamide (LSD). Ligand binding causes a conformation change that triggers signaling via guanine nucleotide-binding proteins (G proteins) and modulates the activity of downstream effectors, such as adenylate cyclase. HTR1B is coupled to G(i)/G(o) G alpha proteins and mediates inhibitory neurotransmission by inhibiting adenylate cyclase activity. Arrestin family members inhibit signaling via G proteins and mediate activation of alternative signaling pathways. Regulates the release of 5-hydroxytryptamine, dopamine and acetylcholine in the brain, and thereby affects neural activity, nociceptive processing, pain perception, mood and behavior. Besides, plays a role in vasoconstriction of cerebral arteries. The protein is 5-hydroxytryptamine receptor 1B (HTR1B) of Cricetulus griseus (Chinese hamster).